We begin with the raw amino-acid sequence, 92 residues long: Small ribosomal subunit protein uS19 (92 aa).

It belongs to the universal ribosomal protein uS19 family.

Protein S19 forms a complex with S13 that binds strongly to the 16S ribosomal RNA. This is Small ribosomal subunit protein uS19 from Streptococcus pyogenes serotype M49 (strain NZ131).